Reading from the N-terminus, the 416-residue chain is Transmembrane protease serine 11B-like protein (416 aa).

Residues Met-1 to Trp-15 are Cytoplasmic-facing. Residues Leu-16–Val-36 form a helical; Signal-anchor for type II membrane protein membrane-spanning segment. At His-37–Ile-416 the chain is on the extracellular side. The SEA domain occupies Lys-44–Lys-161. N-linked (GlcNAc...) asparagine glycosylation is present at Asn-107. The Peptidase S1 domain maps to Ile-185–Gly-415. Cys-210 and Cys-226 are oxidised to a cystine. The Charge relay system role is filled by His-225. N-linked (GlcNAc...) asparagine glycosylation occurs at Asn-235. Asp-270 acts as the Charge relay system in catalysis. Disulfide bonds link Cys-335/Cys-351 and Cys-362/Cys-391. Residue Ser-366 is the Charge relay system of the active site.

The protein belongs to the peptidase S1 family. As to expression, expressed in esophagus, cervix, tongue, and testes.

It is found in the cell membrane. Its activity is regulated as follows. Inhibited by aprotinin, leupeptin, benzamidine, SERPINA1, SPINT1 and SPINT2. Serine protease. In Mus musculus (Mouse), this protein is Transmembrane protease serine 11B-like protein (Tmprss11b).